The primary structure comprises 301 residues: Pseudouridine-5'-phosphate glycosidase (301 aa).

The Proton donor role is filled by Glu-25. Positions 86 and 106 each coordinate substrate. Asp-138 provides a ligand contact to Mn(2+). Ser-140–Asp-142 contacts substrate. The active-site Nucleophile is Lys-159.

The protein belongs to the pseudouridine-5'-phosphate glycosidase family. In terms of assembly, homotrimer. Requires Mn(2+) as cofactor.

The enzyme catalyses D-ribose 5-phosphate + uracil = psi-UMP + H2O. Catalyzes the reversible cleavage of pseudouridine 5'-phosphate (PsiMP) to ribose 5-phosphate and uracil. Functions biologically in the cleavage direction, as part of a pseudouridine degradation pathway. The sequence is that of Pseudouridine-5'-phosphate glycosidase from Geobacillus kaustophilus (strain HTA426).